The sequence spans 188 residues: Protein GrpE (188 aa).

Over residues 1-16 the composition is skewed to basic and acidic residues; the sequence is MEERNEQVVEEVKEAQ. Residues 1–31 are disordered; it reads MEERNEQVVEEVKEAQVEEAVTPENSEETVE.

This sequence belongs to the GrpE family. As to quaternary structure, homodimer.

Its subcellular location is the cytoplasm. Participates actively in the response to hyperosmotic and heat shock by preventing the aggregation of stress-denatured proteins, in association with DnaK and GrpE. It is the nucleotide exchange factor for DnaK and may function as a thermosensor. Unfolded proteins bind initially to DnaJ; upon interaction with the DnaJ-bound protein, DnaK hydrolyzes its bound ATP, resulting in the formation of a stable complex. GrpE releases ADP from DnaK; ATP binding to DnaK triggers the release of the substrate protein, thus completing the reaction cycle. Several rounds of ATP-dependent interactions between DnaJ, DnaK and GrpE are required for fully efficient folding. The polypeptide is Protein GrpE (Bacillus cereus (strain G9842)).